The chain runs to 389 residues: S-adenosylmethionine synthase (389 aa).

Residue His15 coordinates ATP. Asp17 contacts Mg(2+). Residue Glu43 coordinates K(+). L-methionine is bound by residues Glu56 and Gln99. Residues 99–109 (QSPDIAQGVNE) form a flexible loop region. ATP is bound by residues 166–168 (DAK), 234–235 (RF), Asp243, 249–250 (RK), Ala266, and Lys270. An L-methionine-binding site is contributed by Asp243. Lys274 serves as a coordination point for L-methionine.

The protein belongs to the AdoMet synthase family. As to quaternary structure, homotetramer; dimer of dimers. Mg(2+) is required as a cofactor. The cofactor is K(+).

It is found in the cytoplasm. It catalyses the reaction L-methionine + ATP + H2O = S-adenosyl-L-methionine + phosphate + diphosphate. It functions in the pathway amino-acid biosynthesis; S-adenosyl-L-methionine biosynthesis; S-adenosyl-L-methionine from L-methionine: step 1/1. Its function is as follows. Catalyzes the formation of S-adenosylmethionine (AdoMet) from methionine and ATP. The overall synthetic reaction is composed of two sequential steps, AdoMet formation and the subsequent tripolyphosphate hydrolysis which occurs prior to release of AdoMet from the enzyme. The protein is S-adenosylmethionine synthase of Neisseria meningitidis serogroup C / serotype 2a (strain ATCC 700532 / DSM 15464 / FAM18).